Here is a 352-residue protein sequence, read N- to C-terminus: MRPLNVQIRLGNLRHNYRILKEMHGGKLLAVVKADAYGHGAVRCAFALADLADGFAVATIDEGIRLRESGITHPIVLLEGVFEASEYEAVEQYSLWPAVGNQWQLEALLSRHWKKPVKVWLKMDSGMHRTGFFPHDYTSAYAALKQSEYVDSIVKFSHFSCADEPESGMTEIQMEAFDLGTKGLEGEESLANSAAILNIPEARRDWGRAGLALYGISPFGGSDDRLKPVMRLSTRIFGERVLQPHSPIGYGATFYTSKSTRVGLIACGYADGYPRRAPSNSPVAVDGKLTRVIGRISMDMMTIELDASQEGLGHEVELWGDTVNINTVAEAAGTIPYELMCNIKRAKFTYIE.

Lys33 functions as the Proton acceptor; specific for D-alanine in the catalytic mechanism. At Lys33 the chain carries N6-(pyridoxal phosphate)lysine. Arg129 contacts substrate. Tyr250 functions as the Proton acceptor; specific for L-alanine in the catalytic mechanism. Substrate is bound at residue Met298.

Belongs to the alanine racemase family. Pyridoxal 5'-phosphate serves as cofactor.

It carries out the reaction L-alanine = D-alanine. It functions in the pathway amino-acid biosynthesis; D-alanine biosynthesis; D-alanine from L-alanine: step 1/1. Catalyzes the interconversion of L-alanine and D-alanine. May also act on other amino acids. This Neisseria gonorrhoeae (strain ATCC 700825 / FA 1090) protein is Alanine racemase (alr).